We begin with the raw amino-acid sequence, 477 residues long: Phosphomethylpyrimidine synthase (477 aa).

Residues Asn67, Met96, Tyr125, His160, 180-182 (SRG), 221-224 (DGLR), and Glu260 contribute to the substrate site. His264 provides a ligand contact to Zn(2+). Tyr287 is a binding site for substrate. A Zn(2+)-binding site is contributed by His328. Residues Cys408, Cys411, and Cys416 each coordinate [4Fe-4S] cluster. A compositionally biased stretch (basic and acidic residues) spans 427–440 (AGDGMDGLESRTDL). Positions 427–477 (AGDGMDGLESRTDLDSSAAAAVNRPPTGVHRAEKLDDIPCPVAEDDVAADD) are disordered.

This sequence belongs to the ThiC family. It depends on [4Fe-4S] cluster as a cofactor.

The catalysed reaction is 5-amino-1-(5-phospho-beta-D-ribosyl)imidazole + S-adenosyl-L-methionine = 4-amino-2-methyl-5-(phosphooxymethyl)pyrimidine + CO + 5'-deoxyadenosine + formate + L-methionine + 3 H(+). It functions in the pathway cofactor biosynthesis; thiamine diphosphate biosynthesis. Catalyzes the synthesis of the hydroxymethylpyrimidine phosphate (HMP-P) moiety of thiamine from aminoimidazole ribotide (AIR) in a radical S-adenosyl-L-methionine (SAM)-dependent reaction. The sequence is that of Phosphomethylpyrimidine synthase from Natronomonas pharaonis (strain ATCC 35678 / DSM 2160 / CIP 103997 / JCM 8858 / NBRC 14720 / NCIMB 2260 / Gabara) (Halobacterium pharaonis).